A 296-amino-acid chain; its full sequence is Putative ankyrin repeat protein FPV216 (296 aa).

ANK repeat units follow at residues 73 to 102 (SYVN…DVNT) and 107 to 136 (LVIT…NINI).

In Fowlpox virus (strain NVSL) (FPV), this protein is Putative ankyrin repeat protein FPV216.